The sequence spans 518 residues: Putative cytochrome P450 CYP13A7 (518 aa).

C464 contributes to the heme binding site.

The protein belongs to the cytochrome P450 family. Heme serves as cofactor.

In terms of biological role, cytochromes P450 are a group of heme-thiolate monooxygenases. They oxidize a variety of structurally unrelated compounds, including steroids, fatty acids, and xenobiotics. This is Putative cytochrome P450 CYP13A7 (cyp-13A7) from Caenorhabditis elegans.